The primary structure comprises 674 residues: Leucine-rich repeat transmembrane protein FLRT1 (674 aa).

Residues 1–51 (MVVAHSAATATTTPAATVTATVVMTTATMDLRDWLFLCYGLIAFLTEVIDS) form the signal peptide. Topologically, residues 52–552 (TTCPSVCRCD…QNAGPMAGLP (501 aa)) are extracellular. 2 cysteine pairs are disulfide-bonded: Cys54–Cys60 and Cys58–Cys67. Residues 54-80 (CPSVCRCDNGFIYCNDRGLTSIPSDIP) form the LRRNT domain. LRR repeat units follow at residues 81-105 (DDAT…LKTK), 106-126 (VKVQ…INLP), 127-149 (RSLR…SLAR), 151-175 (PLLE…AFAD), 176-197 (SKQL…SGLP), 198-220 (HTLE…AFKG), 222-246 (NSLR…TFSR), 247-269 (LQNL…NLPS), 270-292 (AHLQ…TLAK), and 293-316 (MREL…LFDD). N-linked (GlcNAc...) asparagine glycosylation is present at Asn305. Residues 328-379 (NPWFCGCNLMWLRDWVRARAAVVNVRGLMCQGPEKVRGMAIKDITSEMDECF) form the LRRCT domain. A disulfide bond links Cys332 and Cys357. The region spanning 437 to 532 (KTLVIQVKPL…VCAKAETADS (96 aa)) is the Fibronectin type-III domain. Residues 553–573 (LAGIIGGAVALVFLFLVLGAI) form a helical membrane-spanning segment. The Cytoplasmic portion of the chain corresponds to 574–674 (CWYVHRAGEL…GIPDVDYSYT (101 aa)). Phosphotyrosine occurs at positions 600, 633, and 671.

Interacts with FGFR1. Interacts (via extracellular domain) with ADGRL1/LPHN1 and ADGRL3 (via olfactomedin-like domain). In terms of processing, phosphorylated in response to FGFR1 signaling, but is not a direct substrate of FGFR1 or SRC. A mutant where the Tyr phosphorylation sites have been replaced by Phe displays constitutive FGFR1-dependent activation of downstream MAP kinases. N-glycosylated. Post-translationally, proteolytic cleavage in the juxtamembrane region gives rise to a soluble ectodomain. In terms of tissue distribution, detected in brain (at protein level).

The protein localises to the cell membrane. It is found in the endoplasmic reticulum membrane. It localises to the cytoplasmic vesicle membrane. The protein resides in the cytoplasm. Its subcellular location is the perinuclear region. The protein localises to the cell junction. It is found in the focal adhesion. It localises to the secreted. The protein resides in the cell projection. Its subcellular location is the neuron projection. Plays a role in fibroblast growth factor-mediated signaling cascades that lead to the activation of MAP kinases. Promotes neurite outgrowth via FGFR1-mediated activation of downstream MAP kinases. Promotes an increase both in neurite number and in neurite length. May play a role in cell-cell adhesion and cell guidance via its interaction with ADGRL1/LPHN1 and ADGRL3. The protein is Leucine-rich repeat transmembrane protein FLRT1 of Mus musculus (Mouse).